The following is a 296-amino-acid chain: Porphobilinogen deaminase (296 aa).

C235 is subject to S-(dipyrrolylmethanemethyl)cysteine.

Belongs to the HMBS family. As to quaternary structure, monomer. Dipyrromethane is required as a cofactor.

It carries out the reaction 4 porphobilinogen + H2O = hydroxymethylbilane + 4 NH4(+). It participates in porphyrin-containing compound metabolism; protoporphyrin-IX biosynthesis; coproporphyrinogen-III from 5-aminolevulinate: step 2/4. In terms of biological role, tetrapolymerization of the monopyrrole PBG into the hydroxymethylbilane pre-uroporphyrinogen in several discrete steps. This Alkaliphilus oremlandii (strain OhILAs) (Clostridium oremlandii (strain OhILAs)) protein is Porphobilinogen deaminase.